The primary structure comprises 166 residues: MFPTVTEFMNYGQQTVRAARYIGQGFMITLSHANRLPVTIQYPYEKLITSERFRGRIHFEFDKCIACEVCVRVCPIDLPVVDWKLETDIRKKRLLNYSIDFGICIFCGNCVEYCPTNCLSMTEEYELSTYDRHELNYNQIALGRLPMSIIDDYTIRTILNLPEIKT.

4Fe-4S ferredoxin-type domains lie at 55–84 and 95–124; these read GRIH…VDWK and LNYS…MTEE. Cysteine 64, cysteine 67, cysteine 70, cysteine 74, cysteine 104, cysteine 107, cysteine 110, and cysteine 114 together coordinate [4Fe-4S] cluster.

It belongs to the complex I 23 kDa subunit family. NDH is composed of at least 16 different subunits, 5 of which are encoded in the nucleus. [4Fe-4S] cluster is required as a cofactor.

It is found in the plastid. Its subcellular location is the chloroplast thylakoid membrane. The catalysed reaction is a plastoquinone + NADH + (n+1) H(+)(in) = a plastoquinol + NAD(+) + n H(+)(out). The enzyme catalyses a plastoquinone + NADPH + (n+1) H(+)(in) = a plastoquinol + NADP(+) + n H(+)(out). NDH shuttles electrons from NAD(P)H:plastoquinone, via FMN and iron-sulfur (Fe-S) centers, to quinones in the photosynthetic chain and possibly in a chloroplast respiratory chain. The immediate electron acceptor for the enzyme in this species is believed to be plastoquinone. Couples the redox reaction to proton translocation, and thus conserves the redox energy in a proton gradient. The chain is NAD(P)H-quinone oxidoreductase subunit I, chloroplastic from Sigesbeckia blakei.